The chain runs to 214 residues: Small ribosomal subunit protein uS5 (214 aa).

The S5 DRBM domain occupies 54–117 (LRYDIVDIGI…RDAKMRIIPV (64 aa)).

It belongs to the universal ribosomal protein uS5 family. In terms of assembly, part of the 30S ribosomal subunit. Contacts protein S4.

Its function is as follows. With S4 and S12 plays an important role in translational accuracy. This Sulfolobus acidocaldarius (strain ATCC 33909 / DSM 639 / JCM 8929 / NBRC 15157 / NCIMB 11770) protein is Small ribosomal subunit protein uS5.